A 165-amino-acid chain; its full sequence is Protein-export protein SecB (165 aa).

This sequence belongs to the SecB family. In terms of assembly, homotetramer, a dimer of dimers. One homotetramer interacts with 1 SecA dimer.

It is found in the cytoplasm. Functionally, one of the proteins required for the normal export of preproteins out of the cell cytoplasm. It is a molecular chaperone that binds to a subset of precursor proteins, maintaining them in a translocation-competent state. It also specifically binds to its receptor SecA. In Colwellia psychrerythraea (strain 34H / ATCC BAA-681) (Vibrio psychroerythus), this protein is Protein-export protein SecB.